The chain runs to 406 residues: F-box/WD repeat-containing protein mec-15 (406 aa).

One can recognise an F-box domain in the interval 6–53 (PTELISLPSELLCHLFTYLPQRQLITEIPLVCRRFNTILNDDKFWSRR). 5 WD repeats span residues 101–142 (GHSA…NGED), 156–195 (AHSGWIWNMAQESTSTNFYTTSWDSTVKSWHITDNGALQN), 242–279 (LHKRAVIALAVQGDKIFTSGEDRLMMMVDRRNFSKPVL), 281–320 (EYSPTAYKSCLSLQCNQLLTSTSDGKVKLYDANNFNVLQT), and 365–406 (SHEL…DQEN).

In terms of assembly, may interact with the SCF ubiquitin ligase complex component skr-1. Expressed in several neurons in the head, tail and ventral cord, but absent in touch receptor neurons in adults. Expressed in GABAergic and cholinergic motor neurons.

It localises to the perikaryon. In terms of biological role, plays a role in mechanosensory transduction (touch sensitivity), touch receptor neuron development and synapse formation. Regulates expression of the protein snb-1 and the distribution of synaptic vesicles at synapses to promote synaptic transmission at the neuromuscular junctions of GABAergic motor neurons. The chain is F-box/WD repeat-containing protein mec-15 from Caenorhabditis elegans.